Consider the following 144-residue polypeptide: Protein CT_635 (144 aa).

A disordered region spans residues 110–144 (EVTNDIGHSSHKSPTPKKTKSSSQKKSKKKNWIPL). The segment covering 118 to 144 (SSHKSPTPKKTKSSSQKKSKKKNWIPL) has biased composition (basic residues).

The protein belongs to the chlamydial CPn_0742/CT_635/TC_0003 family.

This Chlamydia trachomatis serovar D (strain ATCC VR-885 / DSM 19411 / UW-3/Cx) protein is Protein CT_635.